A 324-amino-acid chain; its full sequence is R2-like ligand binding oxidase (324 aa).

Mn(2+)-binding residues include glutamate 79, glutamate 112, and histidine 115. A cross-link (3-(O4'-tyrosyl)-valine (Val-Tyr)) is located at residues 82–173 (VTEDIQPFMK…VNQVRASVTY (92 aa)). Residue glutamate 112 participates in Fe cation binding. Fe cation contacts are provided by glutamate 178, glutamate 213, and histidine 216. The tract at residues 304 to 324 (PEALEEKFGEEDAKAMSEAAG) is disordered. The segment covering 307-318 (LEEKFGEEDAKA) has biased composition (basic and acidic residues).

This sequence belongs to the ribonucleoside diphosphate reductase small chain family. R2-like ligand binding oxidase subfamily. As to quaternary structure, homodimer. The cofactor is Fe cation. Mn(2+) serves as cofactor.

Probable oxidase. The protein is R2-like ligand binding oxidase of Rhodococcus jostii (strain RHA1).